Consider the following 362-residue polypeptide: Biotin synthase (362 aa).

One can recognise a Radical SAM core domain in the interval 70–305 (CCGNVVDLCS…QQIIRYAGGR (236 aa)). Residues C88, C92, and C95 each coordinate [4Fe-4S] cluster. 4 residues coordinate [2Fe-2S] cluster: C133, C170, C230, and R300.

The protein belongs to the radical SAM superfamily. Biotin synthase family. As to quaternary structure, homodimer. [4Fe-4S] cluster is required as a cofactor. [2Fe-2S] cluster serves as cofactor.

The enzyme catalyses (4R,5S)-dethiobiotin + (sulfur carrier)-SH + 2 reduced [2Fe-2S]-[ferredoxin] + 2 S-adenosyl-L-methionine = (sulfur carrier)-H + biotin + 2 5'-deoxyadenosine + 2 L-methionine + 2 oxidized [2Fe-2S]-[ferredoxin]. Its pathway is cofactor biosynthesis; biotin biosynthesis; biotin from 7,8-diaminononanoate: step 2/2. Catalyzes the conversion of dethiobiotin (DTB) to biotin by the insertion of a sulfur atom into dethiobiotin via a radical-based mechanism. In Synechocystis sp. (strain ATCC 27184 / PCC 6803 / Kazusa), this protein is Biotin synthase.